A 544-amino-acid chain; its full sequence is Sphingosine-1-phosphate lyase (544 aa).

Over 1–29 the chain is Lumenal; the sequence is MDSFSYSSMKSMLIQARGSLNSRLSEFEP. A helical; Signal-anchor for type III membrane protein transmembrane segment spans residues 30–50; sequence LVLLLVPLVSLFLAQIIGSVF. At 51-544 the chain is on the cytoplasmic side; sequence GVVHEKGLKA…LLVSFMDSQY (494 aa). At K349 the chain carries N6-(pyridoxal phosphate)lysine.

This sequence belongs to the group II decarboxylase family. Sphingosine-1-phosphate lyase subfamily. It depends on pyridoxal 5'-phosphate as a cofactor. In terms of tissue distribution, expressed in the peripheral parts of leaves and the bases of trichomes.

Its subcellular location is the endoplasmic reticulum membrane. The catalysed reaction is sphinganine 1-phosphate = hexadecanal + phosphoethanolamine. Its pathway is lipid metabolism; sphingolipid metabolism. Its function is as follows. Cleaves phosphorylated sphingoid bases (PSBs), such as sphingosine-1-phosphate, into fatty aldehydes and phosphoethanolamine. May play a minor role in maintenance of sphingolipid metabolism during normal plant development and growth, but be required for maintaining sphingoid long chain bases (LCB) and their phosphorylated derivatives (LCB-P) levels when sphingolipid metabolism is perturbed. May play a role in dehydration stress. The chain is Sphingosine-1-phosphate lyase (DPL1) from Arabidopsis thaliana (Mouse-ear cress).